The following is a 699-amino-acid chain: Triacylglycerol hydrolase DDHD2 (699 aa).

Polar residues predominate over residues 1 to 11 (MSSGESHQEQL). Positions 1-25 (MSSGESHQEQLSQSDPSPSPNSCSS) are disordered. Low complexity predominate over residues 12 to 25 (SQSDPSPSPNSCSS). Residues 30 to 112 (DMDASSSYEP…WDELPSEVRR (83 aa)) form the WWE domain. Serine 351 functions as the Nucleophile in the catalytic mechanism. One can recognise an SAM domain in the interval 383–445 (DRGDASTLEE…KILNHFSARK (63 aa)). Serine 447 is subject to Phosphoserine. The DDHD domain maps to 484–688 (LNYKPEIFFA…VLLVLKEIYQ (205 aa)). The segment at 599–635 (QASETAEETEAEPESSSEKSNEANTEEPPVEVKEEAP) is disordered. A compositionally biased stretch (acidic residues) spans 603–613 (TAEETEAEPES).

It belongs to the PA-PLA1 family. As to quaternary structure, forms homooligomers and, to a much smaller extent, heterooligomers with DDHD1.

Its subcellular location is the cytoplasm. The protein localises to the cytosol. It is found in the endoplasmic reticulum-Golgi intermediate compartment. It localises to the golgi apparatus. The protein resides in the cis-Golgi network. It carries out the reaction a triacylglycerol + H2O = a diacylglycerol + a fatty acid + H(+). It catalyses the reaction a diacylglycerol + H2O = a monoacylglycerol + a fatty acid + H(+). The catalysed reaction is a 1,3-diacylglycerol + H2O = a 1-acylglycerol + a fatty acid + H(+). The enzyme catalyses a 1-acylglycerol + H2O = glycerol + a fatty acid + H(+). It carries out the reaction 1,2,3-tri-(9Z-octadecenoyl)-glycerol + H2O = di-(9Z)-octadecenoylglycerol + (9Z)-octadecenoate + H(+). It catalyses the reaction di-(9Z)-octadecenoylglycerol + H2O = (9Z-octadecenoyl)-glycerol + (9Z)-octadecenoate + H(+). The catalysed reaction is 1,3-di-(9Z-octadecenoyl)-glycerol + H2O = 1-(9Z-octadecenoyl)-glycerol + (9Z)-octadecenoate + H(+). The enzyme catalyses trihexadecanoylglycerol + H2O = dihexadecanoylglycerol + hexadecanoate + H(+). It carries out the reaction 1,2-di-(9Z-octadecenoyl)-sn-glycero-3-phosphocholine + H2O = (9Z-octadecenoyl)-sn-glycero-3-phosphocholine + (9Z)-octadecenoate + H(+). It catalyses the reaction 1-(9Z-octadecenoyl)-glycerol + H2O = glycerol + (9Z)-octadecenoate + H(+). The catalysed reaction is 1,2-di-(9Z-octadecenoyl)-sn-glycero-3-phosphate + H2O = 2-(9Z-octadecenoyl)-sn-glycero-3-phosphate + (9Z)-octadecenoate + H(+). The enzyme catalyses 1-hexadecanoyl-2-(9Z-octadecenoyl)-sn-glycero-3-phosphate + H2O = 2-(9Z-octadecenoyl)-sn-glycero-3-phosphate + hexadecanoate + H(+). It carries out the reaction 1-hexadecanoyl-2-(9Z-octadecenoyl)-sn-glycero-3-phosphoethanolamine + H2O = 2-(9Z-octadecenoyl)-sn-glycero-3-phosphoethanolamine + hexadecanoate + H(+). It catalyses the reaction 1-hexadecanoyl-2-(9Z-octadecenoyl)-sn-glycero-3-phospho-L-serine + H2O = 2-(9Z-octadecenoyl)-sn-glycero-3-phospho-L-serine + hexadecanoate + H(+). The catalysed reaction is 1-hexadecanoyl-2-(9Z-octadecenoyl)-sn-glycero-3-phosphocholine + H2O = 2-(9Z-octadecenoyl)-sn-glycero-3-phosphocholine + hexadecanoate + H(+). In terms of biological role, diacylglycerol (DAG) and triacylglycerol (TAG) lipase that is required for proper lipid homeostasis in the central nervous system. It cooperates with PNPLA2/ATGL in neuronal TAG catabolism and hydrolyzes sn-1,3-DAG downstream of PNPLA2/ATGL. In vitro, also acts as a phospholipase that hydrolyzes preferentially phosphatidic acids, including 1,2-dioleoyl-sn-phosphatidic acid, phosphatidylcholine and phosphatidylethanolamine. Specifically binds to phosphatidylinositol 3-phosphate (PI(3)P), phosphatidylinositol 4-phosphate (PI(4)P), phosphatidylinositol 5-phosphate (PI(5)P) and possibly phosphatidylinositol 4,5-bisphosphate (PI(4,5)P2). May be involved in the maintenance of the endoplasmic reticulum and/or Golgi structures. May regulate the transport between Golgi apparatus and plasma membrane. The sequence is that of Triacylglycerol hydrolase DDHD2 from Mus musculus (Mouse).